Here is a 137-residue protein sequence, read N- to C-terminus: Small heat shock protein IbpA (137 aa).

Residues 28–137 (SQSNGGYPPY…ANKPRRIEIN (110 aa)) enclose the sHSP domain.

It belongs to the small heat shock protein (HSP20) family. Monomer. Forms homomultimers of about 100-150 subunits at optimal growth temperatures. Conformation changes to monomers at high temperatures or high ionic concentrations.

The protein localises to the cytoplasm. In terms of biological role, associates with aggregated proteins, together with IbpB, to stabilize and protect them from irreversible denaturation and extensive proteolysis during heat shock and oxidative stress. Aggregated proteins bound to the IbpAB complex are more efficiently refolded and reactivated by the ATP-dependent chaperone systems ClpB and DnaK/DnaJ/GrpE. Its activity is ATP-independent. In Salmonella choleraesuis (strain SC-B67), this protein is Small heat shock protein IbpA.